The sequence spans 312 residues: Acetaldehyde dehydrogenase (312 aa).

12–15 (SGNV) serves as a coordination point for NAD(+). The Acyl-thioester intermediate role is filled by C132. Residues 163 to 171 (SAGPGTRAN) and N290 contribute to the NAD(+) site.

It belongs to the acetaldehyde dehydrogenase family.

The catalysed reaction is acetaldehyde + NAD(+) + CoA = acetyl-CoA + NADH + H(+). This chain is Acetaldehyde dehydrogenase (cbzQ), found in Pseudomonas putida (Arthrobacter siderocapsulatus).